Reading from the N-terminus, the 427-residue chain is Tol-Pal system protein TolB (427 aa).

A signal peptide spans 1 to 23 (MKLIARLMSMCAVLFFAINSAYA).

This sequence belongs to the TolB family. In terms of assembly, the Tol-Pal system is composed of five core proteins: the inner membrane proteins TolA, TolQ and TolR, the periplasmic protein TolB and the outer membrane protein Pal. They form a network linking the inner and outer membranes and the peptidoglycan layer.

It localises to the periplasm. In terms of biological role, part of the Tol-Pal system, which plays a role in outer membrane invagination during cell division and is important for maintaining outer membrane integrity. This chain is Tol-Pal system protein TolB, found in Actinobacillus succinogenes (strain ATCC 55618 / DSM 22257 / CCUG 43843 / 130Z).